The chain runs to 237 residues: Small ribosomal subunit protein uS3 (237 aa).

One can recognise a KH type-2 domain in the interval 39-107 (IRAYLMEELK…ETHLNIVEVR (69 aa)). The tract at residues 213–237 (MASERRATESDNQGGSGRERRRENA) is disordered.

The protein belongs to the universal ribosomal protein uS3 family. As to quaternary structure, part of the 30S ribosomal subunit. Forms a tight complex with proteins S10 and S14.

In terms of biological role, binds the lower part of the 30S subunit head. Binds mRNA in the 70S ribosome, positioning it for translation. This Rhizobium meliloti (strain 1021) (Ensifer meliloti) protein is Small ribosomal subunit protein uS3.